Reading from the N-terminus, the 485-residue chain is Cysteine--tRNA ligase (485 aa).

Residue cysteine 27 participates in Zn(2+) binding. The short motif at 29-39 (ITAYDLCHIGH) is the 'HIGH' region element. Zn(2+)-binding residues include cysteine 208, histidine 233, and glutamate 237. A 'KMSKS' region motif is present at residues 265 to 269 (KMSKS). Lysine 268 contributes to the ATP binding site.

It belongs to the class-I aminoacyl-tRNA synthetase family. In terms of assembly, monomer. Zn(2+) is required as a cofactor.

It localises to the cytoplasm. The enzyme catalyses tRNA(Cys) + L-cysteine + ATP = L-cysteinyl-tRNA(Cys) + AMP + diphosphate. The protein is Cysteine--tRNA ligase of Nitratidesulfovibrio vulgaris (strain DP4) (Desulfovibrio vulgaris).